The chain runs to 544 residues: Methyl-accepting chemotaxis protein McpP (544 aa).

3 helical membrane passes run 12 to 32 (RLWL…LLML), 50 to 70 (VVQT…AGTL), and 192 to 212 (DASL…MLIA). The HAMP domain maps to 213 to 267 (RSIARPLQEAVQAMGNIASGESDLTRRLDTHGSDEITHLGEHFNRFNGKLQGVVG). Positions 272–508 (AAHALAQSAG…EINRNVLDTA (237 aa)) constitute a Methyl-accepting transducer domain.

The protein belongs to the methyl-accepting chemotaxis (MCP) protein family.

The protein resides in the cell membrane. Chemotactic-signal transducers respond to changes in the concentration of attractants and repellents in the environment, transduce a signal from the outside to the inside of the cell, and facilitate sensory adaptation through the variation of the level of methylation. McpP is a chemoreceptor that responds specifically to some C2 and C3 carboxylic acids. Recognizes acetate, pyruvate, propionate, and L-lactate. The protein is Methyl-accepting chemotaxis protein McpP of Pseudomonas putida (strain ATCC 47054 / DSM 6125 / CFBP 8728 / NCIMB 11950 / KT2440).